The primary structure comprises 205 residues: Thymidine kinase (205 aa).

ATP-binding positions include 9 to 16 and 87 to 90; these read SAMNAGKS and DECQ. The active-site Proton acceptor is the Glu88. Cys145, Cys147, Cys182, and His185 together coordinate Zn(2+).

The protein belongs to the thymidine kinase family. In terms of assembly, homotetramer.

It is found in the cytoplasm. The enzyme catalyses thymidine + ATP = dTMP + ADP + H(+). Allosteric enzyme which is feedback inhibited by dTTP and activated by a number of dNDP and dNTP. Functionally, phosphorylates both thymidine and deoxyuridine. The protein is Thymidine kinase of Escherichia coli O157:H7.